Reading from the N-terminus, the 475-residue chain is Tryptophan--tRNA ligase, cytoplasmic (475 aa).

Residues serine 12–proline 68 form the WHEP-TRS domain. The segment at aspartate 61–aspartate 87 is disordered. Lysine 158 carries the post-translational modification N6-succinyllysine. The 'HIGH' region motif lies at proline 168–histidine 177. A 'KMSKS' region motif is present at residues lysine 353–serine 357. Serine 355 is modified (phosphoserine).

It belongs to the class-I aminoacyl-tRNA synthetase family. As to quaternary structure, homodimer. Interacts with oxidized form of GAPDH. Post-translationally, proteolytic cleavage generates 2 forms; T1-TrpRS and T2-TrpRS.

It localises to the cytoplasm. The catalysed reaction is tRNA(Trp) + L-tryptophan + ATP = L-tryptophyl-tRNA(Trp) + AMP + diphosphate + H(+). Its function is as follows. Catalyzes the attachment of tryptophan to tRNA(Trp) in a two-step reaction: tryptophan is first activated by ATP to form Trp-AMP and then transferred to the acceptor end of the tRNA(Trp). Could also possess an angiostatic activity. This Oryctolagus cuniculus (Rabbit) protein is Tryptophan--tRNA ligase, cytoplasmic (WARS1).